Consider the following 787-residue polypeptide: MNHKILKTLEYDKIKQMLQGYAITAFGQEQIATLEPINEADLIQIRLNQTKDGVDIERLKGGIPLPQLENIRPHLKRIEIGAMLNGSELAQIGRVLRATSAVVRFFDDLEKDELELKALPELVAQFVTLPQLTERIRSSVADDGAILDTASTKLRGLRTGLKQLEGQIRSRMASYTHGAKAKYLSDPIVTIRNDRYVIPVKQEYRGQFGGVVHDQSASGQTLFMEPQAIMELNNRLRQLQIEEQQEIERILAELSEAIMPERHNILANAELLGQLDFVNAKAQLAKALKATEPLINAENHVDLKQARHPLIDATKVVANDIAIGADYQAIVVTGPNTGGKTITLKTLGLVQVMAQSGLFITAREESQVGVFSDIFADIGDEQSIEQNLSTFSAHMENIIQILKQIDDRSLVLLDELGAGTDPQEGAALAIAILDQIGIVGANVVASTHYPELKIYGYNRPQTINASMEFDVATLQPTYRLLIGVPGRSNAFDISTRLGLPNSIVDQAKQLMNDESQDLNNMITDLENQRKAAETEYQALRHELTEATDLHQQLSTAYQQFFEDRETEMTKAKEKANAIVEKAEVKADKVITKLRDMQMNQGAQIKENQLIDAKAELGQLHQETTLKKNKVLQRAKRRQTLKVGDDVLVTSYGQRGTLIRQVDSKNWEVQMGIIKMKIANDDLEKQKVVEDNRPQRHVTTVNSGGARHVKAQLDLRGKRYEEAMAEVDQYIDAALLANYQQVTIVHGKGTGAIRQGVQEYLQANRQVKKYEYAPANAGGNGATIVTFK.

334 to 341 serves as a coordination point for ATP; that stretch reads GPNTGGKT. Residues 712 to 787 enclose the Smr domain; that stretch reads LDLRGKRYEE…GNGATIVTFK (76 aa).

It belongs to the DNA mismatch repair MutS family. MutS2 subfamily. In terms of assembly, homodimer. Binds to stalled ribosomes, contacting rRNA.

Functionally, endonuclease that is involved in the suppression of homologous recombination and thus may have a key role in the control of bacterial genetic diversity. Acts as a ribosome collision sensor, splitting the ribosome into its 2 subunits. Detects stalled/collided 70S ribosomes which it binds and splits by an ATP-hydrolysis driven conformational change. Acts upstream of the ribosome quality control system (RQC), a ribosome-associated complex that mediates the extraction of incompletely synthesized nascent chains from stalled ribosomes and their subsequent degradation. Probably generates substrates for RQC. This is Endonuclease MutS2 from Latilactobacillus sakei subsp. sakei (strain 23K) (Lactobacillus sakei subsp. sakei).